The following is a 249-amino-acid chain: Basic leucine zipper 23 (249 aa).

The tract at residues 66–90 (KVSTDDTSESSGKKRPLGNREAVRK) is disordered. Residues 74-121 (ESSGKKRPLGNREAVRKYREKKKAKAASLEDEVMRLKAVNNQLLKRLQ) enclose the bZIP domain. The segment at 78–98 (KKRPLGNREAVRKYREKKKAK) is basic motif. The leucine-zipper stretch occupies residues 102-116 (LEDEVMRLKAVNNQL).

The protein resides in the nucleus. Functionally, transcription factor involved in the response to zinc ion deficiency. Binds to the consensus sequence 5'-[AG]TGTCGACA[CT]-3' also called zinc deficiency response element (ZDRE). The ZDRE sequence is conserved in the plant kingdom and present in the promoters of genes that constitute the primary response to zinc deficiency, comprising additional ZIP metal transporter genes. Required for zinc accumulation in roots. Mediates the expression of the zinc transporter ZIP12 during growth in zinc-deficient conditions. ZIP12 transporter is involved in zinc uptake in roots. This chain is Basic leucine zipper 23, found in Arabidopsis thaliana (Mouse-ear cress).